Reading from the N-terminus, the 240-residue chain is 45 kDa antigen (240 aa).

Fibronectin type-III domains lie at 1 to 109 (EFPD…FHTL) and 110 to 210 (ANGT…KSGH).

The chain is 45 kDa antigen from Taenia ovis (Sheep tapeworm).